Here is a 373-residue protein sequence, read N- to C-terminus: Queuine tRNA-ribosyltransferase (373 aa).

Aspartate 93 (proton acceptor) is an active-site residue. Residues 93–97, aspartate 147, glutamine 189, and glycine 216 each bind substrate; that span reads DSGGF. An RNA binding region spans residues 247 to 253; it reads GVGAPED. Aspartate 266 (nucleophile) is an active-site residue. Positions 271–275 are RNA binding; important for wobble base 34 recognition; sequence TRIAR. Positions 304, 306, 309, and 335 each coordinate Zn(2+).

This sequence belongs to the queuine tRNA-ribosyltransferase family. Homodimer. Within each dimer, one monomer is responsible for RNA recognition and catalysis, while the other monomer binds to the replacement base PreQ1. Zn(2+) is required as a cofactor.

The enzyme catalyses 7-aminomethyl-7-carbaguanine + guanosine(34) in tRNA = 7-aminomethyl-7-carbaguanosine(34) in tRNA + guanine. Its pathway is tRNA modification; tRNA-queuosine biosynthesis. Functionally, catalyzes the base-exchange of a guanine (G) residue with the queuine precursor 7-aminomethyl-7-deazaguanine (PreQ1) at position 34 (anticodon wobble position) in tRNAs with GU(N) anticodons (tRNA-Asp, -Asn, -His and -Tyr). Catalysis occurs through a double-displacement mechanism. The nucleophile active site attacks the C1' of nucleotide 34 to detach the guanine base from the RNA, forming a covalent enzyme-RNA intermediate. The proton acceptor active site deprotonates the incoming PreQ1, allowing a nucleophilic attack on the C1' of the ribose to form the product. After dissociation, two additional enzymatic reactions on the tRNA convert PreQ1 to queuine (Q), resulting in the hypermodified nucleoside queuosine (7-(((4,5-cis-dihydroxy-2-cyclopenten-1-yl)amino)methyl)-7-deazaguanosine). The polypeptide is Queuine tRNA-ribosyltransferase (Halothermothrix orenii (strain H 168 / OCM 544 / DSM 9562)).